Reading from the N-terminus, the 138-residue chain is Small ribosomal subunit protein uS11c (138 aa).

The tract at residues 1-23 (MAKAIPRVGSRKNGRISSRKSAR) is disordered. Residues 9-23 (GSRKNGRISSRKSAR) show a composition bias toward basic residues.

Belongs to the universal ribosomal protein uS11 family. In terms of assembly, part of the 30S ribosomal subunit.

The protein localises to the plastid. Its subcellular location is the chloroplast. The protein is Small ribosomal subunit protein uS11c of Coffea arabica (Arabian coffee).